Here is a 336-residue protein sequence, read N- to C-terminus: Effector SCP41 (336 aa).

The first 19 residues, 1–19 (MRTETASLLLLAALSVAEE), serve as a signal peptide directing secretion. 2 disordered regions span residues 59-99 (LFSP…STNN) and 189-230 (PVGN…GQKG). A compositionally biased stretch (low complexity) spans 63-74 (QQQQQQQQQQQQ).

In terms of assembly, interacts with A.thaliana CBP60G; the interaction is direct. Interacts with A.thaliana SARD1. Interacts with G.hirsutum CBP60B.

The protein resides in the secreted. The protein localises to the host nucleus. Its function is as follows. Effector that binds transcription regulators in the host plant to suppress the host's innate immune response. Inhibits the host plant transcription regulators CBP60G and SARD1. The polypeptide is Effector SCP41 (Verticillium dahliae (strain VdLs.17 / ATCC MYA-4575 / FGSC 10137) (Verticillium wilt)).